Reading from the N-terminus, the 316-residue chain is Elongation factor Ts, mitochondrial (316 aa).

The transit peptide at 1–18 (MFARAPFVRLLSTTSRNL) directs the protein to the mitochondrion. The tract at residues 245 to 269 (EAAESVKTQEGLRSQEGHDPNADPV) is disordered.

Belongs to the EF-Ts family.

Its subcellular location is the mitochondrion. Its function is as follows. Associates with the EF-Tu.GDP complex and induces the exchange of GDP to GTP. It remains bound to the aminoacyl-tRNA.EF-Tu.GTP complex up to the GTP hydrolysis stage on the ribosome. The protein is Elongation factor Ts, mitochondrial of Caenorhabditis elegans.